The chain runs to 81 residues: Short neurotoxin 2 (81 aa).

A signal peptide spans 1-21 (MKTLLLTLVVVTIVCLDLGYT). Intrachain disulfides connect cysteine 24-cysteine 43, cysteine 38-cysteine 60, cysteine 62-cysteine 73, and cysteine 74-cysteine 79.

Belongs to the three-finger toxin family. Short-chain subfamily. Type I alpha-neurotoxin sub-subfamily. In terms of tissue distribution, expressed by the venom gland.

It localises to the secreted. In terms of biological role, binds to muscle nicotinic acetylcholine receptor (nAChR) and inhibit acetylcholine from binding to the receptor, thereby impairing neuromuscular transmission. The protein is Short neurotoxin 2 of Hydrophis peronii (Spiny-headed seasnake).